The primary structure comprises 66 residues: Large ribosomal subunit protein uL29 (66 aa).

Belongs to the universal ribosomal protein uL29 family.

The chain is Large ribosomal subunit protein uL29 from Chelativorans sp. (strain BNC1).